Here is a 203-residue protein sequence, read N- to C-terminus: Holliday junction branch migration complex subunit RuvA (203 aa).

The interval 1 to 65 (MIAYIHGKLL…EDAFDLYGFP (65 aa)) is domain I. The segment at 66–144 (CFDDREVFRT…TLKSATVRSG (79 aa)) is domain II. The interval 145-155 (ACPVEGDRSEF) is flexible linker. A domain III region spans residues 155-203 (FLDALSGLRNLGYGDDEVRDFLKDIFDEEPDLDAGGAIRVALKKISQNK).

This sequence belongs to the RuvA family. Homotetramer. Forms an RuvA(8)-RuvB(12)-Holliday junction (HJ) complex. HJ DNA is sandwiched between 2 RuvA tetramers; dsDNA enters through RuvA and exits via RuvB. An RuvB hexamer assembles on each DNA strand where it exits the tetramer. Each RuvB hexamer is contacted by two RuvA subunits (via domain III) on 2 adjacent RuvB subunits; this complex drives branch migration. In the full resolvosome a probable DNA-RuvA(4)-RuvB(12)-RuvC(2) complex forms which resolves the HJ.

Its subcellular location is the cytoplasm. The RuvA-RuvB-RuvC complex processes Holliday junction (HJ) DNA during genetic recombination and DNA repair, while the RuvA-RuvB complex plays an important role in the rescue of blocked DNA replication forks via replication fork reversal (RFR). RuvA specifically binds to HJ cruciform DNA, conferring on it an open structure. The RuvB hexamer acts as an ATP-dependent pump, pulling dsDNA into and through the RuvAB complex. HJ branch migration allows RuvC to scan DNA until it finds its consensus sequence, where it cleaves and resolves the cruciform DNA. The chain is Holliday junction branch migration complex subunit RuvA from Maridesulfovibrio salexigens (strain ATCC 14822 / DSM 2638 / NCIMB 8403 / VKM B-1763) (Desulfovibrio salexigens).